The chain runs to 218 residues: Probable transaldolase (218 aa).

Lys87 serves as the catalytic Schiff-base intermediate with substrate.

This sequence belongs to the transaldolase family. Type 3B subfamily.

The protein resides in the cytoplasm. The enzyme catalyses D-sedoheptulose 7-phosphate + D-glyceraldehyde 3-phosphate = D-erythrose 4-phosphate + beta-D-fructose 6-phosphate. The protein operates within carbohydrate degradation; pentose phosphate pathway; D-glyceraldehyde 3-phosphate and beta-D-fructose 6-phosphate from D-ribose 5-phosphate and D-xylulose 5-phosphate (non-oxidative stage): step 2/3. Functionally, transaldolase is important for the balance of metabolites in the pentose-phosphate pathway. This Bacteroides thetaiotaomicron (strain ATCC 29148 / DSM 2079 / JCM 5827 / CCUG 10774 / NCTC 10582 / VPI-5482 / E50) protein is Probable transaldolase.